Consider the following 591-residue polypeptide: L-fucose isomerase (591 aa).

Catalysis depends on proton acceptor residues Glu-337 and Asp-361. Mn(2+) contacts are provided by Glu-337, Asp-361, and His-528.

Belongs to the L-fucose isomerase family. Homohexamer. It depends on Mn(2+) as a cofactor.

It is found in the cytoplasm. It carries out the reaction L-fucose = L-fuculose. It functions in the pathway carbohydrate degradation; L-fucose degradation; L-lactaldehyde and glycerone phosphate from L-fucose: step 1/3. Its function is as follows. Converts the aldose L-fucose into the corresponding ketose L-fuculose. The polypeptide is L-fucose isomerase (Citrobacter koseri (strain ATCC BAA-895 / CDC 4225-83 / SGSC4696)).